A 269-amino-acid chain; its full sequence is tRNA pseudouridine synthase A (269 aa).

Residue Asp55 is the Nucleophile of the active site. Position 111 (Tyr111) interacts with substrate.

This sequence belongs to the tRNA pseudouridine synthase TruA family.

The enzyme catalyses uridine(38/39/40) in tRNA = pseudouridine(38/39/40) in tRNA. Formation of pseudouridine at positions 38, 39 and 40 in the anticodon stem and loop of transfer RNAs. The chain is tRNA pseudouridine synthase A from Methanosarcina barkeri (strain Fusaro / DSM 804).